A 113-amino-acid polypeptide reads, in one-letter code: Hydrogenase maturation factor HypA (113 aa).

His-2 is a Ni(2+) binding site. 4 residues coordinate Zn(2+): Cys-73, Cys-76, Cys-89, and Cys-92.

Belongs to the HypA/HybF family.

Functionally, involved in the maturation of [NiFe] hydrogenases. Required for nickel insertion into the metal center of the hydrogenase. The chain is Hydrogenase maturation factor HypA from Beijerinckia indica subsp. indica (strain ATCC 9039 / DSM 1715 / NCIMB 8712).